Reading from the N-terminus, the 474-residue chain is Trehalose-6-phosphate synthase (474 aa).

Arg10 contacts D-glucose 6-phosphate. Position 22-23 (22-23) interacts with UDP-alpha-D-glucose; the sequence is GG. The D-glucose 6-phosphate site is built by Tyr77 and Asp131. Positions 263 and 268 each coordinate UDP-alpha-D-glucose. Arg301 contributes to the D-glucose 6-phosphate binding site. UDP-alpha-D-glucose contacts are provided by residues Phe340 and 366-370; that span reads LVAKE.

Belongs to the glycosyltransferase 20 family. Homotetramer.

The catalysed reaction is D-glucose 6-phosphate + UDP-alpha-D-glucose = alpha,alpha-trehalose 6-phosphate + UDP + H(+). Its pathway is glycan biosynthesis; trehalose biosynthesis. In terms of biological role, probably involved in the osmoprotection via the biosynthesis of trehalose. Catalyzes the transfer of glucose from UDP-alpha-D-glucose (UDP-Glc) to D-glucose 6-phosphate (Glc-6-P) to form trehalose-6-phosphate. Acts with retention of the anomeric configuration of the UDP-sugar donor. The chain is Trehalose-6-phosphate synthase from Escherichia coli O6:K15:H31 (strain 536 / UPEC).